The following is an 84-amino-acid chain: Small ribosomal subunit protein bS20 (84 aa).

The tract at residues Met1–Met28 is disordered.

This sequence belongs to the bacterial ribosomal protein bS20 family.

Binds directly to 16S ribosomal RNA. The protein is Small ribosomal subunit protein bS20 of Listeria welshimeri serovar 6b (strain ATCC 35897 / DSM 20650 / CCUG 15529 / CIP 8149 / NCTC 11857 / SLCC 5334 / V8).